The following is a 543-amino-acid chain: ATP synthase subunit alpha (543 aa).

174–181 (GDRQTGKT) contributes to the ATP binding site.

The protein belongs to the ATPase alpha/beta chains family. In terms of assembly, F-type ATPases have 2 components, CF(1) - the catalytic core - and CF(0) - the membrane proton channel. CF(1) has five subunits: alpha(3), beta(3), gamma(1), delta(1), epsilon(1). CF(0) has three main subunits: a(1), b(2) and c(9-12). The alpha and beta chains form an alternating ring which encloses part of the gamma chain. CF(1) is attached to CF(0) by a central stalk formed by the gamma and epsilon chains, while a peripheral stalk is formed by the delta and b chains.

Its subcellular location is the cell membrane. The catalysed reaction is ATP + H2O + 4 H(+)(in) = ADP + phosphate + 5 H(+)(out). Functionally, produces ATP from ADP in the presence of a proton gradient across the membrane. The alpha chain is a regulatory subunit. In Bifidobacterium longum subsp. infantis (strain ATCC 15697 / DSM 20088 / JCM 1222 / NCTC 11817 / S12), this protein is ATP synthase subunit alpha.